The primary structure comprises 214 residues: Osteoclast-stimulating factor 1 (214 aa).

The SH3 domain maps to 12–71 (GQVKVFRALFTFDPRTPDELYFEEGDILYISDTSDTNWWKGTCRGRTGLIPSNYVAEQAE). ANK repeat units follow at residues 72–101 (TIDH…GING), 105–135 (AGNT…ELNQ), and 139–168 (LGDT…RTDI).

Ubiquitously expressed.

The protein resides in the cytoplasm. In terms of biological role, induces bone resorption, acting probably through a signaling cascade which results in the secretion of factor(s) enhancing osteoclast formation and activity. The polypeptide is Osteoclast-stimulating factor 1 (ostf1) (Monopterus albus (Swamp eel)).